The sequence spans 234 residues: Small ribosomal subunit protein uS3 (234 aa).

One can recognise a KH type-2 domain in the interval 17–86 (VEKFLTKELK…SPQVEVQQVQ (70 aa)).

The protein belongs to the universal ribosomal protein uS3 family. Part of the 30S ribosomal subunit.

In terms of biological role, binds the lower part of the 30S subunit head. This is Small ribosomal subunit protein uS3 from Methanoculleus marisnigri (strain ATCC 35101 / DSM 1498 / JR1).